Reading from the N-terminus, the 77-residue chain is Acyl carrier protein (77 aa).

Residues 2-77 enclose the Carrier domain; sequence SAIDKRVKEI…DAIDYITEHT (76 aa). Ser37 bears the O-(pantetheine 4'-phosphoryl)serine mark.

It belongs to the acyl carrier protein (ACP) family. 4'-phosphopantetheine is transferred from CoA to a specific serine of apo-ACP by AcpS. This modification is essential for activity because fatty acids are bound in thioester linkage to the sulfhydryl of the prosthetic group.

It localises to the cytoplasm. Its pathway is lipid metabolism; fatty acid biosynthesis. Its function is as follows. Carrier of the growing fatty acid chain in fatty acid biosynthesis. In Geobacter metallireducens (strain ATCC 53774 / DSM 7210 / GS-15), this protein is Acyl carrier protein.